A 448-amino-acid chain; its full sequence is Carbamoyl phosphate synthase arginine-specific small chain (448 aa).

The N-terminal 27 residues, 1–27 (MFKNIARLASMARSAPRTTASFQTRFM), are a transit peptide targeting the mitochondrion. Residues 224–415 (HIAVIDCGVK…LGQVHQYRAA (192 aa)) form the Glutamine amidotransferase type-1 domain. C304 serves as the catalytic Nucleophile. Catalysis depends on residues H388 and E390.

Belongs to the CarA family. Heterodimer composed of 2 chains; the small (or glutamine) chain promotes the hydrolysis of glutamine to ammonia, which is used by the large (or ammonia) chain to synthesize carbamoyl phosphate.

It is found in the mitochondrion matrix. The catalysed reaction is hydrogencarbonate + L-glutamine + 2 ATP + H2O = carbamoyl phosphate + L-glutamate + 2 ADP + phosphate + 2 H(+). It catalyses the reaction L-glutamine + H2O = L-glutamate + NH4(+). It functions in the pathway amino-acid biosynthesis; L-arginine biosynthesis; carbamoyl phosphate from bicarbonate: step 1/1. Small subunit of the arginine-specific carbamoyl phosphate synthase (CPSase). CPSase catalyzes the formation of carbamoyl phosphate from the ammonia moiety of glutamine, carbonate, and phosphate donated by ATP, the first step of the arginine biosynthetic pathway. The small subunit (glutamine amidotransferase) binds and cleaves glutamine to supply the large subunit with the substrate ammonia. This Yarrowia lipolytica (strain CLIB 122 / E 150) (Yeast) protein is Carbamoyl phosphate synthase arginine-specific small chain (CPA1).